The chain runs to 159 residues: 6,7-dimethyl-8-ribityllumazine synthase (159 aa).

5-amino-6-(D-ribitylamino)uracil contacts are provided by residues Tyr-23, 58–60 (AYE), and 82–84 (TII). Residue His-90 is the Proton donor of the active site. Ile-115 contributes to the 5-amino-6-(D-ribitylamino)uracil binding site. A (2S)-2-hydroxy-3-oxobutyl phosphate-binding site is contributed by Arg-129.

The protein belongs to the DMRL synthase family. As to quaternary structure, forms an icosahedral capsid composed of 60 subunits, arranged as a dodecamer of pentamers.

The enzyme catalyses (2S)-2-hydroxy-3-oxobutyl phosphate + 5-amino-6-(D-ribitylamino)uracil = 6,7-dimethyl-8-(1-D-ribityl)lumazine + phosphate + 2 H2O + H(+). The protein operates within cofactor biosynthesis; riboflavin biosynthesis; riboflavin from 2-hydroxy-3-oxobutyl phosphate and 5-amino-6-(D-ribitylamino)uracil: step 1/2. Its function is as follows. Catalyzes the formation of 6,7-dimethyl-8-ribityllumazine by condensation of 5-amino-6-(D-ribitylamino)uracil with 3,4-dihydroxy-2-butanone 4-phosphate. This is the penultimate step in the biosynthesis of riboflavin. The polypeptide is 6,7-dimethyl-8-ribityllumazine synthase (Buchnera aphidicola subsp. Baizongia pistaciae (strain Bp)).